Reading from the N-terminus, the 257-residue chain is Imidazole glycerol phosphate synthase subunit HisF (257 aa).

Catalysis depends on residues Asp12 and Asp131.

The protein belongs to the HisA/HisF family. Heterodimer of HisH and HisF.

The protein resides in the cytoplasm. It carries out the reaction 5-[(5-phospho-1-deoxy-D-ribulos-1-ylimino)methylamino]-1-(5-phospho-beta-D-ribosyl)imidazole-4-carboxamide + L-glutamine = D-erythro-1-(imidazol-4-yl)glycerol 3-phosphate + 5-amino-1-(5-phospho-beta-D-ribosyl)imidazole-4-carboxamide + L-glutamate + H(+). It participates in amino-acid biosynthesis; L-histidine biosynthesis; L-histidine from 5-phospho-alpha-D-ribose 1-diphosphate: step 5/9. Functionally, IGPS catalyzes the conversion of PRFAR and glutamine to IGP, AICAR and glutamate. The HisF subunit catalyzes the cyclization activity that produces IGP and AICAR from PRFAR using the ammonia provided by the HisH subunit. The protein is Imidazole glycerol phosphate synthase subunit HisF of Rhodococcus opacus (strain B4).